The chain runs to 262 residues: tRNA pseudouridine synthase A 2 (262 aa).

Aspartate 66 acts as the Nucleophile in catalysis. Substrate is bound at residue tyrosine 125.

Belongs to the tRNA pseudouridine synthase TruA family. Homodimer.

The catalysed reaction is uridine(38/39/40) in tRNA = pseudouridine(38/39/40) in tRNA. In terms of biological role, formation of pseudouridine at positions 38, 39 and 40 in the anticodon stem and loop of transfer RNAs. The protein is tRNA pseudouridine synthase A 2 of Protochlamydia amoebophila (strain UWE25).